Here is a 172-residue protein sequence, read N- to C-terminus: Small ribosomal subunit protein uS5 (172 aa).

The 64-residue stretch at Leu-17–Val-80 folds into the S5 DRBM domain.

Belongs to the universal ribosomal protein uS5 family. As to quaternary structure, part of the 30S ribosomal subunit. Contacts proteins S4 and S8.

Its function is as follows. With S4 and S12 plays an important role in translational accuracy. Functionally, located at the back of the 30S subunit body where it stabilizes the conformation of the head with respect to the body. In Polynucleobacter asymbioticus (strain DSM 18221 / CIP 109841 / QLW-P1DMWA-1) (Polynucleobacter necessarius subsp. asymbioticus), this protein is Small ribosomal subunit protein uS5.